The primary structure comprises 150 residues: Large ribosomal subunit protein uL11 (150 aa).

It belongs to the universal ribosomal protein uL11 family. In terms of assembly, part of the ribosomal stalk of the 50S ribosomal subunit. Interacts with L10 and the large rRNA to form the base of the stalk. L10 forms an elongated spine to which L12 dimers bind in a sequential fashion forming a multimeric L10(L12)X complex. Post-translationally, one or more lysine residues are methylated.

In terms of biological role, forms part of the ribosomal stalk which helps the ribosome interact with GTP-bound translation factors. This chain is Large ribosomal subunit protein uL11, found in Ureaplasma urealyticum serovar 10 (strain ATCC 33699 / Western).